The following is a 287-amino-acid chain: Vesicle-associated protein 4-3 (287 aa).

The segment covering 1–14 (MALTEDKSDSDGRR) has biased composition (basic and acidic residues). Positions 1-45 (MALTEDKSDSDGRRWGKFKLPFRNSNSQAPSASSSSSMATSSSSV) are disordered. The span at 25–45 (SNSQAPSASSSSSMATSSSSV) shows a compositional bias: low complexity. The 123-residue stretch at 99 to 221 (RLKLDPSAKL…EEQVMRVVFL (123 aa)) folds into the MSP domain.

It belongs to the VAMP-associated protein (VAP) (TC 9.B.17) family.

Its function is as follows. May play a role in vesicle trafficking. This is Vesicle-associated protein 4-3 (PVA43) from Arabidopsis thaliana (Mouse-ear cress).